Consider the following 618-residue polypeptide: Putative UDP-glucuronate:xylan alpha-glucuronosyltransferase 3 (618 aa).

A helical; Signal-anchor for type II membrane protein membrane pass occupies residues G32–Y54. Mn(2+)-binding residues include D379 and D381. Substrate contacts are provided by residues D379 to D381, N408 to G410, N435 to Q439, and H489 to K495. H489 provides a ligand contact to Mn(2+). Residues T598–S608 are compositionally biased toward low complexity. Positions T598–L618 are disordered.

Belongs to the glycosyltransferase 8 family. Glycogenin subfamily. Requires Mn(2+) as cofactor.

It is found in the golgi apparatus membrane. In terms of biological role, may be involved in the substitutions of the xylan backbone in stem glucuronoxylan. This chain is Putative UDP-glucuronate:xylan alpha-glucuronosyltransferase 3 (GUX3), found in Arabidopsis thaliana (Mouse-ear cress).